A 63-amino-acid chain; its full sequence is Protein CYSTEINE-RICH TRANSMEMBRANE MODULE 12 (63 aa).

A disordered region spans residues 1 to 34 (MQDMRDQNPPQGYPAAEQVSEQPGQDKKKKKPRF). The chain crosses the membrane as a helical span at residues 40-56 (KGDRGFIEGCLFALCCC).

This sequence belongs to the CYSTM1 family. Homodimer and heterodimers. Binds weakly to CYSTM4, CYSTM6 and CYSTM7. In terms of tissue distribution, mostly expressed in roots, flowers and siliques and, to a lower extent, in stems and leaves.

The protein localises to the cell membrane. Its subcellular location is the cytoplasm. In terms of biological role, involved in resistance to abiotic stress. In Arabidopsis thaliana (Mouse-ear cress), this protein is Protein CYSTEINE-RICH TRANSMEMBRANE MODULE 12.